A 558-amino-acid polypeptide reads, in one-letter code: Phosphatidylserine lipase ABHD16A (558 aa).

2 helical membrane passes run 60–80 (ILAL…FAFF) and 93–113 (VVPF…VACL). At 114-558 (RGIGRWTNPQ…AQNFQMPWHL (445 aa)) the chain is on the cytoplasmic side. The AB hydrolase-1 domain maps to 281 to 407 (LVICCEGNAG…LVTRTVRQHL (127 aa)). Residues Ser355, Asp430, and His507 each act as charge relay system in the active site.

Belongs to the AB hydrolase superfamily. ABHD16 family.

It localises to the membrane. The catalysed reaction is 1-heptadecanoyl-2-(5Z,8Z,11Z,14Z-eicosatetraenoyl)-sn-glycero-3-phosphoserine + H2O = 1-heptadecanoyl-sn-glycero-3-phosphoserine + (5Z,8Z,11Z,14Z)-eicosatetraenoate + H(+). It catalyses the reaction 1-hexadecanoyl-2-(9Z-octadecenoyl)-sn-glycero-3-phospho-L-serine + H2O = 1-hexadecanoyl-sn-glycero-3-phospho-L-serine + (9Z)-octadecenoate + H(+). The enzyme catalyses 1-octadecanoyl-2-(9Z,12Z-octadecadienoyl)-sn-glycero-3-phosphoserine + H2O = 1-octadecanoyl-sn-glycero-3-phosphoserine + (9Z,12Z)-octadecadienoate + H(+). It carries out the reaction 1-heptadecanoyl-2-(5Z,8Z,11Z,14Z-eicosatetraenoyl)-sn-glycero-3-phosphocholine + H2O = 1-heptadecanoyl-sn-glycero-3-phosphocholine + (5Z,8Z,11Z,14Z)-eicosatetraenoate + H(+). The catalysed reaction is 1-hexadecanoyl-2-(9Z-octadecenoyl)-sn-glycero-3-phosphoglycerol + H2O = 1-hexadecanoyl-sn-glycero-3-phosphoglycerol + (9Z)-octadecenoate + H(+). It catalyses the reaction 1-hexadecanoyl-2-(9Z-octadecenoyl)-sn-glycero-3-phospho-(1D-myo-inositol) + H2O = 1-hexadecanoyl-sn-glycero-3-phospho-(1D-myo-inositol) + (9Z)-octadecenoate + H(+). The enzyme catalyses 1-heptadecanoyl-2-(5Z,8Z,11Z,14Z-eicosatetraenoyl)-sn-glycero-3-phosphoethanolamine + H2O = 1-heptadecanoyl-sn-glycero-3-phosphoethanolamine + (5Z,8Z,11Z,14Z)-eicosatetraenoate + H(+). It carries out the reaction 1-hexadecanoyl-2-(9Z-octadecenoyl)-sn-glycero-3-phospho-(1'-sn-glycerol) + H2O = 1-hexadecanoyl-sn-glycero-3-phospho-(1'-sn-glycerol) + (9Z)-octadecenoate + H(+). The catalysed reaction is Hydrolyzes glycerol monoesters of long-chain fatty acids.. It catalyses the reaction 1-tetradecanoylglycerol + H2O = tetradecanoate + glycerol + H(+). The enzyme catalyses 2-hexadecanoylglycerol + H2O = glycerol + hexadecanoate + H(+). It carries out the reaction 1-(9Z-octadecenoyl)-glycerol + H2O = glycerol + (9Z)-octadecenoate + H(+). The catalysed reaction is 2-(9Z-octadecenoyl)-glycerol + H2O = glycerol + (9Z)-octadecenoate + H(+). It catalyses the reaction 2-(9Z,12Z-octadecadienoyl)-glycerol + H2O = (9Z,12Z)-octadecadienoate + glycerol + H(+). The enzyme catalyses 1-(5Z,8Z,11Z,14Z-eicosatetraenoyl)-glycerol + H2O = glycerol + (5Z,8Z,11Z,14Z)-eicosatetraenoate + H(+). It carries out the reaction 2-(5Z,8Z,11Z,14Z-eicosatetraenoyl)-glycerol + H2O = glycerol + (5Z,8Z,11Z,14Z)-eicosatetraenoate + H(+). The catalysed reaction is prostaglandin D2-1-glycerol ester + H2O = prostaglandin D2 + glycerol + H(+). It catalyses the reaction 2-glyceryl-15-deoxy-Delta(12,14)-prostaglandin J2 + H2O = 15-deoxy-Delta(12,14)-prostaglandin J2 + glycerol + H(+). The enzyme catalyses 1-(9Z,12Z-octadecadienoyl)-glycerol + H2O = (9Z,12Z)-octadecadienoate + glycerol + H(+). Inhibited by beta-lactone-based lipid inhibitors, such as beta-lactone palmostatin-B. Phosphatidylserine (PS) lipase that mediates the hydrolysis of phosphatidylserine to generate lysophosphatidylserine (LPS). LPS constitutes a class of signaling lipids that regulates immunological and neurological processes. Has no activity towards diacylglycerol, triacylglycerol or lysophosphatidylserine lipase. Also has monoacylglycerol lipase activity, with preference for 1-(9Z,12Z-octadecadienoyl)-glycerol (1-LG) and 2-glyceryl-15-deoxy-Delta(12,14)-prostaglandin J2 (15d-PGJ(2)-G). This is Phosphatidylserine lipase ABHD16A from Homo sapiens (Human).